We begin with the raw amino-acid sequence, 126 residues long: Protein FMP49, mitochondrial (126 aa).

Its subcellular location is the mitochondrion. The chain is Protein FMP49, mitochondrial from Saccharomyces cerevisiae (strain ATCC 204508 / S288c) (Baker's yeast).